Here is a 192-residue protein sequence, read N- to C-terminus: Large ribosomal subunit protein uL3 (192 aa).

It belongs to the universal ribosomal protein uL3 family. Part of the 50S ribosomal subunit. Forms a cluster with proteins L14 and L19.

In terms of biological role, one of the primary rRNA binding proteins, it binds directly near the 3'-end of the 23S rRNA, where it nucleates assembly of the 50S subunit. This Helicobacter hepaticus (strain ATCC 51449 / 3B1) protein is Large ribosomal subunit protein uL3 (rplC).